Here is a 67-residue protein sequence, read N- to C-terminus: Major cold shock protein (67 aa).

In terms of domain architecture, CSD spans 4–63 (GTVKWFNAEKGFGFISTENGQDVFAHFSAIQTSGFKTLEEGQKVAFDVEEGQRGPQAVNI).

As to quaternary structure, homodimer.

It localises to the cytoplasm. This Streptococcus pyogenes serotype M6 (strain ATCC BAA-946 / MGAS10394) protein is Major cold shock protein (cspA).